The sequence spans 303 residues: Putative CRISPR-associated endonuclease Cas1 2 (303 aa).

Glutamate 149 serves as a coordination point for Mn(2+).

It belongs to the CRISPR-associated endonuclease Cas1 family. In terms of assembly, homodimer, forms a heterotetramer with a Cas2 homodimer. Requires Mg(2+) as cofactor. Mn(2+) is required as a cofactor.

In terms of biological role, CRISPR (clustered regularly interspaced short palindromic repeat), is an adaptive immune system that provides protection against mobile genetic elements (viruses, transposable elements and conjugative plasmids). CRISPR clusters contain sequences complementary to antecedent mobile elements and target invading nucleic acids. CRISPR clusters are transcribed and processed into CRISPR RNA (crRNA). Acts as a dsDNA endonuclease. Involved in the integration of spacer DNA into the CRISPR cassette. The protein is Putative CRISPR-associated endonuclease Cas1 2 of Methanospirillum hungatei JF-1 (strain ATCC 27890 / DSM 864 / NBRC 100397 / JF-1).